Reading from the N-terminus, the 123-residue chain is Probable prefoldin subunit 4 (123 aa).

The protein belongs to the prefoldin subunit beta family. As to quaternary structure, heterohexamer of two PFD-alpha type and four PFD-beta type subunits.

Its function is as follows. Binds specifically to cytosolic chaperonin (c-CPN) and transfers target proteins to it. Binds to nascent polypeptide chain and promotes folding in an environment in which there are many competing pathways for nonnative proteins. The sequence is that of Probable prefoldin subunit 4 from Schizosaccharomyces pombe (strain 972 / ATCC 24843) (Fission yeast).